The sequence spans 150 residues: SsrA-binding protein (150 aa).

Belongs to the SmpB family.

The protein localises to the cytoplasm. Required for rescue of stalled ribosomes mediated by trans-translation. Binds to transfer-messenger RNA (tmRNA), required for stable association of tmRNA with ribosomes. tmRNA and SmpB together mimic tRNA shape, replacing the anticodon stem-loop with SmpB. tmRNA is encoded by the ssrA gene; the 2 termini fold to resemble tRNA(Ala) and it encodes a 'tag peptide', a short internal open reading frame. During trans-translation Ala-aminoacylated tmRNA acts like a tRNA, entering the A-site of stalled ribosomes, displacing the stalled mRNA. The ribosome then switches to translate the ORF on the tmRNA; the nascent peptide is terminated with the 'tag peptide' encoded by the tmRNA and targeted for degradation. The ribosome is freed to recommence translation, which seems to be the essential function of trans-translation. The chain is SsrA-binding protein from Nitratiruptor sp. (strain SB155-2).